The chain runs to 330 residues: Malate dehydrogenase (330 aa).

13-19 contributes to the NAD(+) binding site; sequence GAAGQIG. Residues Arg94 and Arg100 each contribute to the substrate site. NAD(+) contacts are provided by residues Asn107, Gln114, and 131-133; that span reads VGN. Positions 133 and 164 each coordinate substrate. Catalysis depends on His189, which acts as the Proton acceptor.

The protein belongs to the LDH/MDH superfamily. MDH type 2 family.

It catalyses the reaction (S)-malate + NAD(+) = oxaloacetate + NADH + H(+). Its function is as follows. Catalyzes the reversible oxidation of malate to oxaloacetate. In Deinococcus radiodurans (strain ATCC 13939 / DSM 20539 / JCM 16871 / CCUG 27074 / LMG 4051 / NBRC 15346 / NCIMB 9279 / VKM B-1422 / R1), this protein is Malate dehydrogenase.